We begin with the raw amino-acid sequence, 218 residues long: Superoxide dismutase [Mn], mitochondrial (218 aa).

Mn(2+) is bound by residues histidine 27, histidine 84, aspartate 174, and histidine 178.

Belongs to the iron/manganese superoxide dismutase family. In terms of assembly, homotetramer. It depends on Mn(2+) as a cofactor.

The protein resides in the mitochondrion matrix. It carries out the reaction 2 superoxide + 2 H(+) = H2O2 + O2. Its function is as follows. Destroys superoxide anion radicals which are normally produced within the cells and which are toxic to biological systems. This Chlamydomonas reinhardtii (Chlamydomonas smithii) protein is Superoxide dismutase [Mn], mitochondrial (SODA).